The chain runs to 257 residues: MVKSHIGGWILVLFVAAWSDIGLCKKRPKPGGGWNTGGSRYPGQGSPGGNRYPPQGGGGWGQPHGGGWGQPHGGGWGQPHGGGWGQPHGGGGWGQGGGSHGQWNKPSKPKTNMKHVAGAAAAGAVVGGLGGYMLGSAMSRPLIHFGSDYEDRYYRENMYRYPNQVYYRPVDQYSNQNSFVHDCVNITVKQHTVTTTTKGENFTETDVKMIERVVEQMCITQYQKEYEAYAQRGASVILFSSPPVILLISFLLFLIVG.

A signal peptide spans 1-24; that stretch reads MVKSHIGGWILVLFVAAWSDIGLC. The interaction with GRB2, ERI3 and SYN1 stretch occupies residues 25-234; that stretch reads KKRPKPGGGW…EYEAYAQRGA (210 aa). Residues 28 to 113 form a disordered region; it reads PKPGGGWNTG…NKPSKPKTNM (86 aa). 5 tandem repeats follow at residues 54–62, 63–70, 71–78, 79–86, and 87–95. The tract at residues 54–95 is 5 X 8 AA tandem repeats of P-H-G-G-G-W-G-Q; that stretch reads PQGGGGWGQPHGGGWGQPHGGGWGQPHGGGWGQPHGGGGWGQ. The segment covering 55 to 100 has biased composition (gly residues); it reads QGGGGWGQPHGGGWGQPHGGGWGQPHGGGWGQPHGGGGWGQGGGSH. His-64, Gly-65, Gly-66, His-72, Gly-73, Gly-74, His-80, Gly-81, Gly-82, His-88, Gly-90, and Gly-91 together coordinate Cu(2+). A disulfide bridge links Cys-183 with Cys-218. Asn-185 and Asn-201 each carry an N-linked (GlcNAc...) asparagine glycan. Ala-234 carries GPI-anchor amidated alanine lipidation. A propeptide spans 235–257 (removed in mature form); sequence SVILFSSPPVILLISFLLFLIVG.

Belongs to the prion family. As to quaternary structure, monomer and homodimer. Has a tendency to aggregate into amyloid fibrils containing a cross-beta spine, formed by a steric zipper of superposed beta-strands. Soluble oligomers may represent an intermediate stage on the path to fibril formation. Copper binding may promote oligomerization. Interacts with GRB2, APP, ERI3/PRNPIP and SYN1. Mislocalized cytosolically exposed PrP interacts with MGRN1; this interaction alters MGRN1 subcellular location and causes lysosomal enlargement. Interacts with KIAA1191.

It is found in the cell membrane. The protein localises to the golgi apparatus. Functionally, its primary physiological function is unclear. Has cytoprotective activity against internal or environmental stresses. May play a role in neuronal development and synaptic plasticity. May be required for neuronal myelin sheath maintenance. May play a role in iron uptake and iron homeostasis. Soluble oligomers are toxic to cultured neuroblastoma cells and induce apoptosis (in vitro). Association with GPC1 (via its heparan sulfate chains) targets PRNP to lipid rafts. Also provides Cu(2+) or Zn(2+) for the ascorbate-mediated GPC1 deaminase degradation of its heparan sulfate side chains. This chain is Major prion protein (PRNP), found in Sus scrofa (Pig).